A 269-amino-acid chain; its full sequence is Eukaryotic translation initiation factor 3 subunit G-1 (269 aa).

The RRM domain occupies 188–266 (AAIRISNLSE…LILSVEWSKP (79 aa)). Ser-198 is modified (phosphoserine).

The protein belongs to the eIF-3 subunit G family. As to quaternary structure, component of the eukaryotic translation initiation factor 3 (eIF-3) complex. The eIF-3 complex interacts with pix.

The protein resides in the cytoplasm. RNA-binding component of the eukaryotic translation initiation factor 3 (eIF-3) complex, which is involved in protein synthesis of a specialized repertoire of mRNAs and, together with other initiation factors, stimulates binding of mRNA and methionyl-tRNAi to the 40S ribosome. The eIF-3 complex specifically targets and initiates translation of a subset of mRNAs involved in cell proliferation. This subunit can bind 18S rRNA. This chain is Eukaryotic translation initiation factor 3 subunit G-1, found in Drosophila melanogaster (Fruit fly).